Here is a 173-residue protein sequence, read N- to C-terminus: Ribosome maturation factor RimM (173 aa).

A PRC barrel domain is found at 94 to 168 (SNESYLCDLL…LIRINPPKGL (75 aa)).

This sequence belongs to the RimM family. Binds ribosomal protein uS19.

The protein resides in the cytoplasm. An accessory protein needed during the final step in the assembly of 30S ribosomal subunit, possibly for assembly of the head region. Essential for efficient processing of 16S rRNA. May be needed both before and after RbfA during the maturation of 16S rRNA. It has affinity for free ribosomal 30S subunits but not for 70S ribosomes. The protein is Ribosome maturation factor RimM of Lawsonia intracellularis (strain PHE/MN1-00).